Here is a 37-residue protein sequence, read N- to C-terminus: Large ribosomal subunit protein bL36 (37 aa).

The protein belongs to the bacterial ribosomal protein bL36 family.

This chain is Large ribosomal subunit protein bL36, found in Rhodococcus erythropolis (strain PR4 / NBRC 100887).